Reading from the N-terminus, the 268-residue chain is MERYESLFTQLKERKEGAFVPFVTLGDPGIEQSLKIIDTLIEAGADALELGIPFSDPLADGPTIQNATLRAFAAGVTPAQCFEVLALIRQKHPTIPIGLLMYANLVFNKGIDEFYAECEKVGVDSVLVADVPVEESAPFRQAALRHNVAPIFICPPNADDDLLRQIASYGRGYTYLLSRAGVTGAENRAALPLNHLVAKLKEYNAAPPLQGFGISAPDQVKAAIDAGAAGAISGSAIVKIIEQHINEPEKMLAALKAFVQPMKAATRS.

Catalysis depends on proton acceptor residues Glu49 and Asp60.

The protein belongs to the TrpA family. Tetramer of two alpha and two beta chains.

It catalyses the reaction (1S,2R)-1-C-(indol-3-yl)glycerol 3-phosphate + L-serine = D-glyceraldehyde 3-phosphate + L-tryptophan + H2O. The protein operates within amino-acid biosynthesis; L-tryptophan biosynthesis; L-tryptophan from chorismate: step 5/5. In terms of biological role, the alpha subunit is responsible for the aldol cleavage of indoleglycerol phosphate to indole and glyceraldehyde 3-phosphate. This chain is Tryptophan synthase alpha chain, found in Escherichia coli O1:K1 / APEC.